Consider the following 1394-residue polypeptide: DNA-directed RNA polymerase subunit beta' (1394 aa).

Residues C71, C73, C86, and C89 each contribute to the Zn(2+) site. Mg(2+)-binding residues include D462, D464, and D466. The Zn(2+) site is built by C811, C885, C892, and C895.

It belongs to the RNA polymerase beta' chain family. As to quaternary structure, the RNAP catalytic core consists of 2 alpha, 1 beta, 1 beta' and 1 omega subunit. When a sigma factor is associated with the core the holoenzyme is formed, which can initiate transcription. It depends on Mg(2+) as a cofactor. Zn(2+) serves as cofactor.

The enzyme catalyses RNA(n) + a ribonucleoside 5'-triphosphate = RNA(n+1) + diphosphate. DNA-dependent RNA polymerase catalyzes the transcription of DNA into RNA using the four ribonucleoside triphosphates as substrates. This is DNA-directed RNA polymerase subunit beta' from Xanthobacter autotrophicus (strain ATCC BAA-1158 / Py2).